A 341-amino-acid polypeptide reads, in one-letter code: MPKSNHSTAPLPFPILIGDIGGTNARFSILTDAYAEPKQFPNVRTADFATIDEAIQKGVLDKTAVQPRSAILAVAGPINDDEIPLTNCAWVVRPKTMIEGLGIEDVLVVNDFEAQALAIAALSDENRERIGSATGDMVASRVVLGPGTGLGVGGLVHAQHTWIPVPGEGGHIDLGPRSKRDYEIFPHIETIEGRVSAEQILCGRGLVNLYNAICVVDGIQPTMKDPADITSHALDGSDKVAVETVSLFATYLGRVAGDMAMVFMARGGVYLSGGISQKIIPALKKPEFRQAFEDKAPHSALLRTIPTYVVTHPLAALAGLSSYARMPANFGVSTEGRRWRR.

18-23 (GDIGGT) contributes to the ATP binding site.

It belongs to the bacterial glucokinase family.

Its subcellular location is the cytoplasm. The enzyme catalyses D-glucose + ATP = D-glucose 6-phosphate + ADP + H(+). The polypeptide is Glucokinase (Rhizobium etli (strain ATCC 51251 / DSM 11541 / JCM 21823 / NBRC 15573 / CFN 42)).